A 644-amino-acid chain; its full sequence is MKANGLDNDPARTRMERTDIDSEHPEAQPLLNNNHRTLGAGSANGPAVNEGRDIESDGFIKDSLFQIRKGYRIFIHNSKWILNILILINTIWLVTTLISDFFFNINILFGFSNRYASFNDLTLIFISIIANSFNLWFNKLGLYSALDYSLNVTLCVLTLFNLALTYLIKYTRQRIGFVGTFTYLWTSFSFFIGAILDWYLLFYNNSINEPLEERRIDDANISTFNENHTNSTENRDRSQYGSGSPTPTHRSQLVQNKHTLTEWVSIGFRNTIKFLILIFFALFTLNTLLTTLDTYRLTHKLPITVQSPSYEAFHYVDAAKTYQLHITCYGDVFDQENNTDLSENKKQPIILFEHGGYDTGYLSATWIEELYHLDKIQRYCLYDRPGYGLSDSPPAPISIAMVAESLRYALIKDAKIKGPFTTVGYDLGGLFTRVFTAKNVDIVDSMMLVESWHEELLLKNYIQRLLPPGRGDGDDGDDGNGNDGDGRNHDKTWLPSEIERHNEFRLWWKGIWSSLGWRLQTSWLLAHHGSKERIYGRDMKYQGRFLRSKFLESVTSSILSYRDVTNNAESLQNVKTSIVSSKEMVKKSALWGDWQRDLTKISHKTQEWKIVEGGHEIYKYGLGKQQTQEVLLRLIGELGKLTED.

Residues methionine 1 to glycine 39 form a disordered region. The Cytoplasmic portion of the chain corresponds to methionine 1–threonine 90. The span at aspartate 9–glutamate 26 shows a compositional bias: basic and acidic residues. A phosphoserine mark is found at serine 22, serine 56, and serine 63. The helical transmembrane segment at isoleucine 91–phenylalanine 111 threads the bilayer. The Vacuolar segment spans residues serine 112–threonine 122. A helical transmembrane segment spans residues leucine 123–tyrosine 143. Topologically, residues serine 144–aspartate 147 are cytoplasmic. A helical transmembrane segment spans residues tyrosine 148 to isoleucine 168. Residues lysine 169–arginine 174 are Vacuolar-facing. A helical transmembrane segment spans residues isoleucine 175 to isoleucine 195. Residues leucine 196–threonine 271 lie on the Cytoplasmic side of the membrane. A disordered region spans residues asparagine 225–serine 251. Over residues glutamine 239–serine 251 the composition is skewed to polar residues. Phosphoserine is present on serine 244. The helical transmembrane segment at isoleucine 272 to leucine 292 threads the bilayer. Over aspartate 293–aspartate 644 the chain is Vacuolar. Positions proline 348–lysine 619 constitute an AB hydrolase-1 domain. The tract at residues glycine 469 to threonine 492 is disordered.

The protein localises to the vacuole membrane. This is an uncharacterized protein from Saccharomyces cerevisiae (strain YJM789) (Baker's yeast).